We begin with the raw amino-acid sequence, 117 residues long: MMIEVLKSKIHCARVTEANLNYMGSITIDENLLDAANMIAGEKVYIADNNNGERFETYIIKGERGSGKICLNGAAARKVQPDDIVIIMSYALMDFEEAKSFKPTVIFPDPATNSVVK.

Serine 25 serves as the catalytic Schiff-base intermediate with substrate; via pyruvic acid. Serine 25 is subject to Pyruvic acid (Ser). Residue threonine 57 coordinates substrate. Residue tyrosine 58 is the Proton donor of the active site. 73 to 75 (GAA) contributes to the substrate binding site.

The protein belongs to the PanD family. In terms of assembly, heterooctamer of four alpha and four beta subunits. It depends on pyruvate as a cofactor. Is synthesized initially as an inactive proenzyme, which is activated by self-cleavage at a specific serine bond to produce a beta-subunit with a hydroxyl group at its C-terminus and an alpha-subunit with a pyruvoyl group at its N-terminus.

Its subcellular location is the cytoplasm. It catalyses the reaction L-aspartate + H(+) = beta-alanine + CO2. Its pathway is cofactor biosynthesis; (R)-pantothenate biosynthesis; beta-alanine from L-aspartate: step 1/1. Functionally, catalyzes the pyruvoyl-dependent decarboxylation of aspartate to produce beta-alanine. The polypeptide is Aspartate 1-decarboxylase (Bacteroides fragilis (strain ATCC 25285 / DSM 2151 / CCUG 4856 / JCM 11019 / LMG 10263 / NCTC 9343 / Onslow / VPI 2553 / EN-2)).